A 198-amino-acid chain; its full sequence is DNA polymerase zeta subunit 2 (198 aa).

Residues 4-196 (EIKADIIVEA…DLGLKMDVLI (193 aa)) form the HORMA domain.

Belongs to the MAD2 family. Accessory subunit of the zeta DNA polymerase complex, which consists of the catalytic component PolZ1/DNApol-zeta and PolZ2/Rev7. Interacts with the apurinic/apyrimidinic (AP) endonuclease Rrp1 (via the N-terminus).

Functionally, as the accessory component of the DNA polymerase zeta complex, involved in translesion DNA synthesis (TLS) and various DNA repair mechanisms. Promotes the apurinic/apyrimidinic (AP) endonuclease activity of Rrp1 and is therefore likely to be involved in the base excision repair (BER) pathway responsible for repair of DNA lesions. It does not appear to influence the synthesis activity of the catalytic component Dmpol-zeta. The protein is DNA polymerase zeta subunit 2 of Drosophila melanogaster (Fruit fly).